The sequence spans 375 residues: Alcohol dehydrogenase 1 (375 aa).

N-acetylserine is present on serine 2. Positions 47, 68, 98, 101, 104, 112, and 175 each coordinate Zn(2+). NAD(+) is bound by residues 200–205 (GLGGVG), aspartate 224, and lysine 229. The residue at position 234 (lysine 234) is an N6-succinyllysine. 293 to 295 (VGV) is a binding site for NAD(+). Position 340 is an N6-succinyllysine (lysine 340). Arginine 370 contributes to the NAD(+) binding site.

Belongs to the zinc-containing alcohol dehydrogenase family. Class-I subfamily. The cofactor is Zn(2+).

It is found in the cytoplasm. It catalyses the reaction a primary alcohol + NAD(+) = an aldehyde + NADH + H(+). It carries out the reaction a secondary alcohol + NAD(+) = a ketone + NADH + H(+). This chain is Alcohol dehydrogenase 1 (ADH1), found in Peromyscus maniculatus (North American deer mouse).